The chain runs to 147 residues: Hemoglobin subunit beta (147 aa).

Valine 2 is modified (N-acetylvaline). The Globin domain maps to 3–147; sequence HLTPEEKSAV…VANALAHKYH (145 aa). Residue threonine 13 is modified to Phosphothreonine. Serine 45 is subject to Phosphoserine. Lysine 60 is subject to N6-acetyllysine. Residue histidine 64 participates in heme b binding. An N6-acetyllysine modification is found at lysine 83. Histidine 93 lines the heme b pocket. Cysteine 94 carries the post-translational modification S-nitrosocysteine. N6-acetyllysine is present on lysine 145.

Belongs to the globin family. As to quaternary structure, heterotetramer of two alpha chains and two beta chains in adult hemoglobin A (HbA). In terms of tissue distribution, red blood cells.

Functionally, involved in oxygen transport from the lung to the various peripheral tissues. The protein is Hemoglobin subunit beta (HBB) of Pan paniscus (Pygmy chimpanzee).